The primary structure comprises 512 residues: Tabersonine 16-hydroxylase 2 (512 aa).

A topological domain (lumenal) is located at residue M1. The helical transmembrane segment at 2-22 threads the bilayer; the sequence is ELYYFSTFAFLLFCFILAKTL. At 23–512 the chain is on the cytoplasmic side; sequence KKSGQSNLKL…YSASSLKGKY (490 aa). C445 contacts heme.

Belongs to the cytochrome P450 family. The cofactor is heme. In terms of tissue distribution, expressed at low levels in roots, fruits, stems, flower buds and flowers, but highly expressed in young leaves. Detected in adaxial and abaxial epidermis cells.

The protein localises to the endoplasmic reticulum membrane. It catalyses the reaction (-)-tabersonine + reduced [NADPH--hemoprotein reductase] + O2 = 16-hydroxytabersonine + oxidized [NADPH--hemoprotein reductase] + H2O + H(+). In terms of biological role, involved in the foliar biosynthesis of vindoline, a precursor of vinblastine and vincristine. Hydroxylates specifically tabersonine, 2,3-dihydrotabersonine and 2,3-dihydro-3-hydroxytabersonine, but has no activity with naringenin, tryptamine, secologanin, strictosidine, ajmalicine, vindoline and catharanthine. This is Tabersonine 16-hydroxylase 2 from Catharanthus roseus (Madagascar periwinkle).